Reading from the N-terminus, the 194-residue chain is Putative lipoprotein LppK (194 aa).

The N-terminal stretch at 1-26 (MSRWTHRTFFIALSAIVTTAGFGSSG) is a signal peptide. Residue C27 is the site of N-palmitoyl cysteine attachment. The S-diacylglycerol cysteine moiety is linked to residue C27. Residues 174 to 194 (GNSSGLTNPAPIKAPTPTPSH) are disordered. The span at 185–194 (IKAPTPTPSH) shows a compositional bias: pro residues.

This sequence belongs to the MTB12 family.

The protein resides in the cell membrane. The polypeptide is Putative lipoprotein LppK (lppK) (Mycobacterium leprae (strain TN)).